Consider the following 462-residue polypeptide: Chitinase-like mite allergen Der p 18.0101 (462 aa).

An N-terminal signal peptide occupies residues 1 to 25 (MTRLSFTVLIFLAAYFGSNIRPNVA). One can recognise a GH18 domain in the interval 29 to 378 (PKTVCYYESW…HAINSNYFRG (350 aa)). A disulfide bond links cysteine 33 and cysteine 58. N-linked (GlcNAc...) asparagine glycosylation is found at asparagine 338 and asparagine 441. One can recognise a Chitin-binding type-2 domain in the interval 404–462 (VFHCHQEGFFRDKTYCAKYYECKKGDFGLEQTVHHCPNHSQAFDEVSRTCVDHAKIPGC). Cysteine 439 and cysteine 453 are oxidised to a cystine.

Belongs to the glycosyl hydrolase 18 family. Chitinase class II subfamily. Expressed in the peritrophic matrix of the midgut, and only very weakly in fecal pellets.

It is found in the secreted. In terms of biological role, probably a non-catalytic chitinase-like protein, which binds to insoluble chitin and enhances the activity of the catalytic chitinases. Has weak chitin-binding activity. The protein is Chitinase-like mite allergen Der p 18.0101 of Dermatophagoides pteronyssinus (European house dust mite).